The sequence spans 277 residues: Diaminopimelate epimerase (277 aa).

2 residues coordinate substrate: Asn-11 and Asn-62. Cys-71 (proton donor) is an active-site residue. Substrate is bound by residues 72-73 (GN), Asn-160, Asn-193, and 211-212 (ER). Catalysis depends on Cys-220, which acts as the Proton acceptor. 221–222 (GT) is a binding site for substrate.

Belongs to the diaminopimelate epimerase family. Homodimer.

The protein localises to the cytoplasm. It catalyses the reaction (2S,6S)-2,6-diaminopimelate = meso-2,6-diaminopimelate. It participates in amino-acid biosynthesis; L-lysine biosynthesis via DAP pathway; DL-2,6-diaminopimelate from LL-2,6-diaminopimelate: step 1/1. Its function is as follows. Catalyzes the stereoinversion of LL-2,6-diaminopimelate (L,L-DAP) to meso-diaminopimelate (meso-DAP), a precursor of L-lysine. This is Diaminopimelate epimerase from Methanococcus maripaludis (strain C6 / ATCC BAA-1332).